The primary structure comprises 592 residues: Cell division protein FtsZ (592 aa).

Residues 24-28, 111-113, glutamate 142, arginine 146, and aspartate 190 contribute to the GTP site; these read GGGGN and GTG. The segment at 333-362 is disordered; the sequence is KFQKSVSSVRKNDSGINQTASHPQSSQLRS.

The protein belongs to the FtsZ family. Homodimer. Polymerizes to form a dynamic ring structure in a strictly GTP-dependent manner. Interacts directly with several other division proteins.

It localises to the cytoplasm. Essential cell division protein that forms a contractile ring structure (Z ring) at the future cell division site. The regulation of the ring assembly controls the timing and the location of cell division. One of the functions of the FtsZ ring is to recruit other cell division proteins to the septum to produce a new cell wall between the dividing cells. Binds GTP and shows GTPase activity. This chain is Cell division protein FtsZ, found in Bartonella bacilliformis.